A 104-amino-acid chain; its full sequence is Evasin P1174 (104 aa).

An N-terminal signal peptide occupies residues 1–27 (LKTFCLFLQIAVFIALGIQIFLCGTDA). 3 disulfide bridges follow: cysteine 40-cysteine 59, cysteine 44-cysteine 61, and cysteine 55-cysteine 72. 3 N-linked (GlcNAc...) asparagine glycosylation sites follow: asparagine 43, asparagine 49, and asparagine 58. The tract at residues 85–104 (KPTSEEIADASPRPKETNSH) is disordered.

It is found in the secreted. Its function is as follows. Salivary chemokine-binding protein which binds to host chemokines CXCL1 and CXCL8. This Ixodes ricinus (Common tick) protein is Evasin P1174.